We begin with the raw amino-acid sequence, 380 residues long: Probable inorganic pyrophosphatase (380 aa).

Positions 198, 203, and 235 each coordinate Mg(2+).

This sequence belongs to the PPase family. The cofactor is Mg(2+).

The catalysed reaction is diphosphate + H2O = 2 phosphate + H(+). The sequence is that of Probable inorganic pyrophosphatase from Plasmodium falciparum (isolate 3D7).